The following is a 1476-amino-acid chain: Cystic fibrosis transmembrane conductance regulator (1476 aa).

The Cytoplasmic segment spans residues Met-1–Phe-77. Residues Val-78–Gln-98 traverse the membrane as a helical segment. The ABC transmembrane type-1 1 domain maps to Phe-81–Leu-365. Topologically, residues Pro-99 to Tyr-122 are extracellular. The chain crosses the membrane as a helical span at residues Leu-123–His-146. Residues His-147–Leu-195 lie on the Cytoplasmic side of the membrane. Residues Ala-196 to Trp-216 form a helical membrane-spanning segment. Over Asp-217–Ser-222 the chain is Extracellular. A helical membrane pass occupies residues Ala-223–Met-243. The Cytoplasmic segment spans residues Met-244–Arg-298. Residues Ser-299–Phe-319 traverse the membrane as a helical segment. The Extracellular segment spans residues Leu-320 to Thr-339. The helical transmembrane segment at Ile-340–Val-358 threads the bilayer. Residues Gln-359–Gly-853 lie on the Cytoplasmic side of the membrane. ATP contacts are provided by residues Trp-401, Gly-458 to Thr-465, and Gln-493. In terms of domain architecture, ABC transporter 1 spans Val-412–Gly-646. The S-palmitoyl cysteine moiety is linked to residue Cys-524. Phosphoserine is present on residues Ser-549 and Ser-660. The tract at residues Thr-654–Glu-826 is disordered R region. At Ser-670 the chain carries Phosphoserine; by PKA. Phosphoserine is present on residues Ser-684, Ser-698, and Ser-710. Position 715 is a phosphothreonine (Thr-715). Ser-732, Ser-763, Ser-785, Ser-790, and Ser-808 each carry phosphoserine. Residues Leu-854–Phe-874 traverse the membrane as a helical segment. The ABC transmembrane type-1 2 domain maps to Leu-854–Arg-1153. Over Val-875 to Ile-913 the chain is Extracellular. N-linked (GlcNAc...) asparagine glycans are attached at residues Asn-889 and Asn-895. The discontinuously helical transmembrane segment at Tyr-914–His-934 threads the bilayer. The Cytoplasmic portion of the chain corresponds to Thr-935 to Thr-985. A helical transmembrane segment spans residues Ile-986–Leu-1006. At Gln-1007–Pro-1008 the chain is on the extracellular side. Residues Tyr-1009–Leu-1029 traverse the membrane as a helical segment. The Cytoplasmic portion of the chain corresponds to His-1030–Thr-1090. Residues Leu-1091 to Phe-1111 traverse the membrane as a helical segment. At Ile-1112–Gly-1125 the chain is on the extracellular side. The helical transmembrane segment at Ile-1126–Ile-1146 threads the bilayer. The Cytoplasmic portion of the chain corresponds to Asp-1147–Leu-1476. The ABC transporter 2 domain occupies Val-1208 to Ser-1439. ATP-binding positions include Tyr-1215 and Gly-1240–Ser-1247. The tract at residues Arg-1382–Leu-1476 is interaction with GORASP2. Cys-1391 carries the S-palmitoyl cysteine lipid modification. Phosphoserine is present on residues Ser-1440 and Ser-1452. Residues Leu-1445–Pro-1456 are compositionally biased toward basic residues. The tract at residues Leu-1445–Leu-1476 is disordered. Acidic residues predominate over residues Glu-1466 to Leu-1476. A PDZ-binding motif is present at residues Thr-1474–Leu-1476.

The protein belongs to the ABC transporter superfamily. ABCC family. CFTR transporter (TC 3.A.1.202) subfamily. As to quaternary structure, monomer; does not require oligomerization for channel activity. May form oligomers in the membrane. Interacts with SLC4A7 through NHERF1. Interacts with SHANK2. Interacts with NHERF1 and MYO6. Interacts (via C-terminus) with GOPC (via PDZ domain); this promotes CFTR internalization and thereby decreases channel activity. Interacts with SLC4A7 through NHERF1. Found in a complex with MYO5B and RAB11A. Interacts with ANO1. Interacts with SLC26A8. Interacts with AHCYL1; the interaction increases CFTR activity. Interacts with CSE1L. The core-glycosylated form interacts with GORASP2 (via PDZ GRASP-type 1 domain) in respone to ER stress. Interacts with MARCHF2; the interaction leads to CFTR ubiqtuitination and degradation. Interacts with ADGRG2. In terms of processing, N-glycosylated. Post-translationally, phosphorylated; cAMP treatment promotes phosphorylation and activates the channel. Dephosphorylation decreases the ATPase activity (in vitro). Phosphorylation at PKA sites activates the channel. Phosphorylation at PKC sites enhances the response to phosphorylation by PKA. Phosphorylated by AMPK; this inhibits channel activity. Ubiquitinated, leading to its degradation in the lysosome. Deubiquitination by USP10 in early endosomes enhances its endocytic recycling to the cell membrane. Ubiquitinated by RNF185 during ER stress. Ubiquitinated by MARCHF2. In terms of tissue distribution, detected in epithelial cells in nasopharynx, submandibular gland, pancreas and ileum (at protein level). Expressed in the epididymis. In the caput section of the epididymis, expressed uniformly on both the luminal and basolateral sides of the ducts and on sperm in the caput lumen (at protein level). In the cauda, detected along the luminal border but not continuously and is also expressed on the basolateral surface. Within the caudal lumen, detected on sperm.

The protein localises to the apical cell membrane. It localises to the early endosome membrane. Its subcellular location is the cell membrane. It is found in the recycling endosome membrane. The protein resides in the endoplasmic reticulum membrane. The protein localises to the nucleus. It carries out the reaction ATP + H2O + closed Cl(-) channel = ADP + phosphate + open Cl(-) channel.. It catalyses the reaction chloride(in) = chloride(out). The enzyme catalyses hydrogencarbonate(in) = hydrogencarbonate(out). The catalysed reaction is ATP + H2O = ADP + phosphate + H(+). Functionally, epithelial ion channel that plays an important role in the regulation of epithelial ion and water transport and fluid homeostasis. Mediates the transport of chloride ions across the cell membrane. Possesses an intrinsic ATPase activity and utilizes ATP to gate its channel; the passive flow of anions through the channel is gated by cycles of ATP binding and hydrolysis by the ATP-binding domains. The ion channel is also permeable to HCO(3)(-); selectivity depends on the extracellular chloride concentration. Exerts its function also by modulating the activity of other ion channels and transporters. Contributes to the regulation of the pH and the ion content of the epithelial fluid layer. Modulates the activity of the epithelial sodium channel (ENaC) complex, in part by regulating the cell surface expression of the ENaC complex. May regulate bicarbonate secretion and salvage in epithelial cells by regulating the transporter SLC4A7. Can inhibit the chloride channel activity of ANO1. Plays a role in the chloride and bicarbonate homeostasis during sperm epididymal maturation and capacitation. The polypeptide is Cystic fibrosis transmembrane conductance regulator (Rattus norvegicus (Rat)).